We begin with the raw amino-acid sequence, 87 residues long: UPF0512 protein B (87 aa).

This sequence belongs to the UPF0512 family.

This chain is UPF0512 protein B, found in Dictyostelium discoideum (Social amoeba).